A 244-amino-acid chain; its full sequence is Vesicle-associated membrane protein-associated protein SCS2 (244 aa).

Ser-2 bears the N-acetylserine mark. Residues 2–222 are Cytoplasmic-facing; it reads SAVEISPDVL…EAATVPAENE (221 aa). The region spanning 3 to 126 is the MSP domain; sequence AVEISPDVLV…ISKKIKVKYL (124 aa). Ser-106 is modified (phosphoserine). The segment at 135-219 is disordered; that stretch reads QNQNIQENKE…QIKEAATVPA (85 aa). Positions 153-168 are enriched in basic and acidic residues; the sequence is SEPKEVPAVVNEKEVP. The span at 199–211 shows a compositional bias: polar residues; it reads QTSNSTPAPQNQI. Residues 223–243 form a helical; Anchor for type IV membrane protein membrane-spanning segment; that stretch reads SSSMGIFILVALLILVLGWFY. Residue Arg-244 is a topological domain, lumenal.

This sequence belongs to the VAMP-associated protein (VAP) (TC 9.B.17) family. In terms of assembly, interacts with OPI1. Also interacts with PBI1. Interacts with EPO1.

It localises to the endoplasmic reticulum membrane. The protein localises to the nucleus membrane. Functionally, acts as an endoplasmic reticulum (ER) membrane anchor for cytoplasmic proteins via binding to the FFAT motif of targeted proteins. Regulates phospholipid biosynthesis by modulating the subcellular localization of the transcriptional repressor OPI1. Also contributes to the tethering of the ER to the plasma membrane. Allows interorganelle phosphatidylserine (PtdSer) transport via a process that involves the acceptor membrane complex PDR17-PDS2 that binds to PBI1 which in turn ligates to SCS2 and phosphatidic acid present in the donor membrane, forming a zone of apposition that facilitates PtdSer transfer. This is Vesicle-associated membrane protein-associated protein SCS2 from Saccharomyces cerevisiae (strain ATCC 204508 / S288c) (Baker's yeast).